Here is a 112-residue protein sequence, read N- to C-terminus: uncharacterized protein (112 aa).

Residues 1–27 form a disordered region; that stretch reads MIASIGDSAEPPLRRTRRAQQQDRPPT.

This is an uncharacterized protein from Orgyia pseudotsugata multicapsid polyhedrosis virus (OpMNPV).